We begin with the raw amino-acid sequence, 161 residues long: Allophycocyanin beta chain (161 aa).

N4-methylasparagine is present on Asn71. (2R,3E)-phycocyanobilin is bound at residue Cys81.

The protein belongs to the phycobiliprotein family. In terms of assembly, heterodimer of an alpha and a beta chain. Post-translationally, contains one covalently linked phycocyanobilin chromophore.

It localises to the cellular thylakoid membrane. Its function is as follows. Light-harvesting photosynthetic bile pigment-protein from the phycobiliprotein complex. Allophycocyanin has a maximum absorption at approximately 650 nanometers. The sequence is that of Allophycocyanin beta chain (apcB) from Synechocystis sp. (strain PCC 6714) (Aphanocapsa sp. (strain PCC 6714)).